We begin with the raw amino-acid sequence, 219 residues long: Glycerol-3-phosphate acyltransferase 2 (219 aa).

The next 5 helical transmembrane spans lie at 1–21 (MVFWIAGAVGLAIAYLLGSTP), 55–75 (WPALVVLLVDVLKGVGAVVFA), 93–113 (ALDLQSLEPWAVCLTGLAVLL), 135–155 (VLLAMSWPVGLGAAMVFGVAL), and 160–180 (IVSLSSMLAALTAIALVCGLE).

It belongs to the PlsY family. Probably interacts with PlsX.

It localises to the cell inner membrane. The catalysed reaction is an acyl phosphate + sn-glycerol 3-phosphate = a 1-acyl-sn-glycero-3-phosphate + phosphate. It functions in the pathway lipid metabolism; phospholipid metabolism. Catalyzes the transfer of an acyl group from acyl-phosphate (acyl-PO(4)) to glycerol-3-phosphate (G3P) to form lysophosphatidic acid (LPA). This enzyme utilizes acyl-phosphate as fatty acyl donor, but not acyl-CoA or acyl-ACP. In Rhizobium johnstonii (strain DSM 114642 / LMG 32736 / 3841) (Rhizobium leguminosarum bv. viciae), this protein is Glycerol-3-phosphate acyltransferase 2.